The following is a 120-amino-acid chain: Putative pterin-4-alpha-carbinolamine dehydratase (120 aa).

Belongs to the pterin-4-alpha-carbinolamine dehydratase family.

It carries out the reaction (4aS,6R)-4a-hydroxy-L-erythro-5,6,7,8-tetrahydrobiopterin = (6R)-L-erythro-6,7-dihydrobiopterin + H2O. The chain is Putative pterin-4-alpha-carbinolamine dehydratase from Bdellovibrio bacteriovorus (strain ATCC 15356 / DSM 50701 / NCIMB 9529 / HD100).